The following is a 609-amino-acid chain: Dihydroxy-acid dehydratase (609 aa).

Asp81 provides a ligand contact to Mg(2+). Residue Cys122 coordinates [2Fe-2S] cluster. The Mg(2+) site is built by Asp123 and Lys124. Residue Lys124 is modified to N6-carboxylysine. Residue Cys195 coordinates [2Fe-2S] cluster. Position 491 (Glu491) interacts with Mg(2+). Residue Ser517 is the Proton acceptor of the active site.

It belongs to the IlvD/Edd family. Homodimer. [2Fe-2S] cluster is required as a cofactor. It depends on Mg(2+) as a cofactor.

The catalysed reaction is (2R)-2,3-dihydroxy-3-methylbutanoate = 3-methyl-2-oxobutanoate + H2O. It catalyses the reaction (2R,3R)-2,3-dihydroxy-3-methylpentanoate = (S)-3-methyl-2-oxopentanoate + H2O. It participates in amino-acid biosynthesis; L-isoleucine biosynthesis; L-isoleucine from 2-oxobutanoate: step 3/4. It functions in the pathway amino-acid biosynthesis; L-valine biosynthesis; L-valine from pyruvate: step 3/4. Functions in the biosynthesis of branched-chain amino acids. Catalyzes the dehydration of (2R,3R)-2,3-dihydroxy-3-methylpentanoate (2,3-dihydroxy-3-methylvalerate) into 2-oxo-3-methylpentanoate (2-oxo-3-methylvalerate) and of (2R)-2,3-dihydroxy-3-methylbutanoate (2,3-dihydroxyisovalerate) into 2-oxo-3-methylbutanoate (2-oxoisovalerate), the penultimate precursor to L-isoleucine and L-valine, respectively. The sequence is that of Dihydroxy-acid dehydratase from Acinetobacter baumannii (strain ATCC 17978 / DSM 105126 / CIP 53.77 / LMG 1025 / NCDC KC755 / 5377).